Reading from the N-terminus, the 353-residue chain is Inactive metacaspase-4 (353 aa).

Gly2 carries the N-myristoyl glycine lipid modification.

Belongs to the peptidase C14B family. Palmitoylated. Post-translationally, proteolytic cleavage by MCA3 occurs prior or during secretion and requires MCA4 membrane localization. Cleavage is dispensable for secretion and parasite growth and virulence in the mammalian host. In vitro, can be cleaved by MCA2 but specifically cleaved by MCA3 in vivo.

The protein resides in the cell projection. Its subcellular location is the cilium. It localises to the flagellum membrane. It is found in the secreted. In terms of biological role, inactive metacaspase which plays a role in parasite bloodstream form growth and in parasite virulence within the mammalian host. In Trypanosoma brucei brucei, this protein is Inactive metacaspase-4.